Consider the following 161-residue polypeptide: uncharacterized protein (161 aa).

This is an uncharacterized protein from Mycobacterium tuberculosis (strain CDC 1551 / Oshkosh).